A 1048-amino-acid polypeptide reads, in one-letter code: Protein argonaute 7 (1048 aa).

Residues 1-14 show a composition bias toward basic and acidic residues; that stretch reads MEGEREGVVAKNED. 2 disordered regions span residues 1–50 and 121–141; these read MEGE…GSSG and KAAD…KKPP. Positions 16–37 are enriched in gly residues; the sequence is AGGGGGGLGTGGNGGGGGGGSA. Residues 131 to 141 are compositionally biased toward basic residues; it reads MWKHRPSKKPP. In terms of domain architecture, PAZ spans 422–530; that stretch reads KRCDFLKDLP…VPMELCVVCE (109 aa). Residues 709-1017 form the Piwi domain; sequence LLICVMERRH…AAYRGRLYLE (309 aa).

The protein belongs to the argonaute family. Ago subfamily. Expressed in the reproductive shoot apex.

Functionally, involved in the RNA silencing pathway. May bind to short RNAs such as microRNAs (miRNAs) or short interfering RNAs (siRNAs), and represses the translation of mRNAs which are complementary to them. Regulates shoot apical meristem (SAM) initiation and maintenance and leaf polarization through the trans-acting siRNAS (ta-siRNAs) pathway which probably modulates the expression of the ARF2, ARF3, ARF4, ARF14 and ARF15 genes. This Oryza sativa subsp. japonica (Rice) protein is Protein argonaute 7 (AGO7).